Here is a 451-residue protein sequence, read N- to C-terminus: Chromosomal replication initiator protein DnaA (451 aa).

Residues 1–72 form a domain I, interacts with DnaA modulators region; it reads MSLPTSLWDK…TELLDELSDT (72 aa). The interval 72 to 114 is domain II; the sequence is TPPQIRLQIGSRSTEMPTKNSHEPSHRKAAAPPAGTTISHTQA. The span at 81–90 shows a compositional bias: polar residues; the sequence is GSRSTEMPTK. The tract at residues 81–106 is disordered; the sequence is GSRSTEMPTKNSHEPSHRKAAAPPAG. A domain III, AAA+ region region spans residues 115 to 331; that stretch reads NINSNFTFDS…GALKRVIANA (217 aa). Residues Gly159, Gly161, Lys162, and Thr163 each contribute to the ATP site. Residues 332–451 are domain IV, binds dsDNA; the sequence is HFTGQSITVD…YKNLMRILSG (120 aa).

It belongs to the DnaA family. As to quaternary structure, oligomerizes as a right-handed, spiral filament on DNA at oriC.

Its subcellular location is the cytoplasm. Plays an essential role in the initiation and regulation of chromosomal replication. ATP-DnaA binds to the origin of replication (oriC) to initiate formation of the DNA replication initiation complex once per cell cycle. Binds the DnaA box (a 9 base pair repeat at the origin) and separates the double-stranded (ds)DNA. Forms a right-handed helical filament on oriC DNA; dsDNA binds to the exterior of the filament while single-stranded (ss)DNA is stabiized in the filament's interior. The ATP-DnaA-oriC complex binds and stabilizes one strand of the AT-rich DNA unwinding element (DUE), permitting loading of DNA polymerase. After initiation quickly degrades to an ADP-DnaA complex that is not apt for DNA replication. Binds acidic phospholipids. The sequence is that of Chromosomal replication initiator protein DnaA from Coxiella burnetii (strain CbuK_Q154) (Coxiella burnetii (strain Q154)).